Consider the following 130-residue polypeptide: Histone H2A type 1-C (130 aa).

The disordered stretch occupies residues 1 to 22 (MSGRGKQGGKARAKAKSRSSRA). S2 carries the post-translational modification N-acetylserine. S2 is subject to Phosphoserine; by RPS6KA5. A Citrulline; alternate modification is found at R4. Symmetric dimethylarginine; by PRMT5; alternate is present on R4. K6 and K10 each carry N6-(2-hydroxyisobutyryl)lysine; alternate. N6-acetyllysine; alternate is present on K6. The span at 7 to 19 (QGGKARAKAKSRS) shows a compositional bias: basic residues. K10 and K14 each carry N6-(beta-hydroxybutyryl)lysine; alternate. K10 bears the N6-lactoyllysine; alternate mark. The residue at position 10 (K10) is an N6-succinyllysine; alternate. K14 participates in a covalent cross-link: Glycyl lysine isopeptide (Lys-Gly) (interchain with G-Cter in ubiquitin); alternate. K16 participates in a covalent cross-link: Glycyl lysine isopeptide (Lys-Gly) (interchain with G-Cter in ubiquitin). Position 37 is an N6-(2-hydroxyisobutyryl)lysine; alternate (K37). K37 is subject to N6-(beta-hydroxybutyryl)lysine; alternate. The residue at position 37 (K37) is an N6-crotonyllysine; alternate. An N6-(2-hydroxyisobutyryl)lysine mark is found at K75 and K76. K96 is modified (N6-(2-hydroxyisobutyryl)lysine; alternate). At K96 the chain carries N6-(beta-hydroxybutyryl)lysine; alternate. K96 carries the post-translational modification N6-succinyllysine; alternate. K96 is subject to N6-glutaryllysine; alternate. Q105 carries the N5-methylglutamine modification. K119 is subject to N6-(2-hydroxyisobutyryl)lysine; alternate. K119 carries the post-translational modification N6-(beta-hydroxybutyryl)lysine; alternate. An N6-crotonyllysine; alternate mark is found at K119 and K120. N6-glutaryllysine; alternate occurs at positions 119 and 120. A Glycyl lysine isopeptide (Lys-Gly) (interchain with G-Cter in ubiquitin); alternate cross-link involves residue K120. The residue at position 121 (T121) is a Phosphothreonine; by DCAF1. The residue at position 126 (K126) is an N6-crotonyllysine; alternate. Residue K126 is modified to N6-glutaryllysine; alternate.

Belongs to the histone H2A family. The nucleosome is a histone octamer containing two molecules each of H2A, H2B, H3 and H4 assembled in one H3-H4 heterotetramer and two H2A-H2B heterodimers. The octamer wraps approximately 147 bp of DNA. Post-translationally, deiminated on Arg-4 in granulocytes upon calcium entry. Monoubiquitination of Lys-120 (H2AK119Ub) by RING1, TRIM37 and RNF2/RING2 complex gives a specific tag for epigenetic transcriptional repression and participates in X chromosome inactivation of female mammals. It is involved in the initiation of both imprinted and random X inactivation. Ubiquitinated H2A is enriched in inactive X chromosome chromatin. Ubiquitination of H2A functions downstream of methylation of 'Lys-27' of histone H3 (H3K27me). H2AK119Ub by RNF2/RING2 can also be induced by ultraviolet and may be involved in DNA repair. Monoubiquitination of Lys-120 (H2AK119Ub) by TRIM37 may promote transformation of cells in a number of breast cancers. Following DNA double-strand breaks (DSBs), it is ubiquitinated through 'Lys-63' linkage of ubiquitin moieties by the E2 ligase UBE2N and the E3 ligases RNF8 and RNF168, leading to the recruitment of repair proteins to sites of DNA damage. Ubiquitination at Lys-14 and Lys-16 (H2AK13Ub and H2AK15Ub, respectively) in response to DNA damage is initiated by RNF168 that mediates monoubiquitination at these 2 sites, and 'Lys-63'-linked ubiquitin are then conjugated to monoubiquitin; RNF8 is able to extend 'Lys-63'-linked ubiquitin chains in vitro. Deubiquitinated by USP51 at Lys-14 and Lys-16 (H2AK13Ub and H2AK15Ub, respectively) after damaged DNA is repaired. H2AK119Ub and ionizing radiation-induced 'Lys-63'-linked ubiquitination (H2AK13Ub and H2AK15Ub) are distinct events. In terms of processing, phosphorylation on Ser-2 (H2AS1ph) is enhanced during mitosis. Phosphorylation on Ser-2 by RPS6KA5/MSK1 directly represses transcription. Acetylation of H3 inhibits Ser-2 phosphorylation by RPS6KA5/MSK1. Phosphorylation at Thr-121 (H2AT120ph) by DCAF1 is present in the regulatory region of many tumor suppresor genes and down-regulates their transcription. Post-translationally, glutamine methylation at Gln-105 (H2AQ104me) by FBL is specifically dedicated to polymerase I. It is present at 35S ribosomal DNA locus and impairs binding of the FACT complex. Symmetric dimethylation on Arg-4 by the PRDM1/PRMT5 complex may play a crucial role in the germ-cell lineage. In terms of processing, crotonylation (Kcr) is specifically present in male germ cells and marks testis-specific genes in post-meiotic cells, including X-linked genes that escape sex chromosome inactivation in haploid cells. Crotonylation marks active promoters and enhancers and confers resistance to transcriptional repressors. It is also associated with post-meiotically activated genes on autosomes. Post-translationally, lactylated in macrophages by EP300/P300 by using lactoyl-CoA directly derived from endogenous or exogenous lactate, leading to stimulates gene transcription.

Its subcellular location is the nucleus. The protein resides in the chromosome. Its function is as follows. Core component of nucleosome. Nucleosomes wrap and compact DNA into chromatin, limiting DNA accessibility to the cellular machineries which require DNA as a template. Histones thereby play a central role in transcription regulation, DNA repair, DNA replication and chromosomal stability. DNA accessibility is regulated via a complex set of post-translational modifications of histones, also called histone code, and nucleosome remodeling. This chain is Histone H2A type 1-C, found in Homo sapiens (Human).